Consider the following 567-residue polypeptide: Phosphoglucomutase-like protein 5 (567 aa).

Positions 1-26 (MEGSPIPVLTVPTAPYEDQRPAGGGG) are disordered. Position 120 is a phosphothreonine (Thr120). At Ser122 the chain carries Phosphoserine.

Belongs to the phosphohexose mutase family. Interacts with DMD/dystrophin; the interaction is direct. Interacts with UTRN/utrophin. In terms of tissue distribution, detected in smooth and cardiac muscle at high levels and in skeletal muscle at low level. Present in other tissues due to vascular or other smooth muscle component. Low levels are present in liver, kidney, skin and brain (at protein level).

The protein localises to the cell junction. It localises to the adherens junction. Its subcellular location is the cytoplasm. It is found in the cytoskeleton. The protein resides in the cell membrane. The protein localises to the sarcolemma. Functionally, component of adherens-type cell-cell and cell-matrix junctions. Has no phosphoglucomutase activity in vitro. The chain is Phosphoglucomutase-like protein 5 from Homo sapiens (Human).